A 260-amino-acid chain; its full sequence is Granzyme A (260 aa).

The first 26 residues, methionine 1–cysteine 26, serve as a signal peptide directing secretion. A propeptide spans glutamate 27–arginine 28 (activation peptide). Residues isoleucine 29–lysine 257 enclose the Peptidase S1 domain. Cysteine 54 and cysteine 70 form a disulfide bridge. Catalysis depends on charge relay system residues histidine 69 and aspartate 113. Cystine bridges form between cysteine 147–cysteine 217, cysteine 178–cysteine 196, and cysteine 207–cysteine 232. N-linked (GlcNAc...) asparagine glycosylation is found at asparagine 157 and asparagine 169. Serine 211 functions as the Charge relay system in the catalytic mechanism.

It belongs to the peptidase S1 family. Granzyme subfamily. As to quaternary structure, homodimer; disulfide-linked. Interacts with APEX1. In terms of tissue distribution, found in cytotoxic lymphocytes and in normal lymphoid tissues such as thymus and spleen. More abundant in lymphoid tissues than isoform HF2.

Its subcellular location is the secreted. It is found in the cytoplasmic granule. The catalysed reaction is Hydrolysis of proteins, including fibronectin, type IV collagen and nucleolin. Preferential cleavage: -Arg-|-Xaa-, -Lys-|-Xaa- &gt;&gt; -Phe-|-Xaa- in small molecule substrates.. Abundant protease in the cytosolic granules of cytotoxic T-cells and NK-cells which activates caspase-independent pyroptosis when delivered into the target cell through the immunological synapse. It cleaves after Lys or Arg. Cleaves APEX1 after 'Lys-31' and destroys its oxidative repair activity. Cleaves the nucleosome assembly protein SET after 'Lys-189', which disrupts its nucleosome assembly activity and allows the SET complex to translocate into the nucleus to nick and degrade the DNA. The protein is Granzyme A (Gzma) of Mus musculus (Mouse).